The primary structure comprises 1001 residues: Phosphoenolpyruvate carboxylase (1001 aa).

Catalysis depends on residues H189 and K642.

It belongs to the PEPCase type 1 family. Mg(2+) serves as cofactor.

It carries out the reaction oxaloacetate + phosphate = phosphoenolpyruvate + hydrogencarbonate. Forms oxaloacetate, a four-carbon dicarboxylic acid source for the tricarboxylic acid cycle. This is Phosphoenolpyruvate carboxylase from Prochlorococcus marinus (strain SARG / CCMP1375 / SS120).